The following is a 302-amino-acid chain: Dermonecrotic toxin LiSicTox-alphaIA1bii (302 aa).

The signal sequence occupies residues 1–14; that stretch reads ARVVLGCWSVLSQA. Residues 15–22 constitute a propeptide that is removed on maturation; it reads AQTDDEER. His34 is a catalytic residue. Positions 54 and 56 each coordinate Mg(2+). The active-site Nucleophile is the His70. Intrachain disulfides connect Cys74/Cys80 and Cys76/Cys219. Mg(2+) is bound at residue Asp114.

Belongs to the arthropod phospholipase D family. Class II subfamily. Class IIa sub-subfamily. Requires Mg(2+) as cofactor. As to expression, expressed by the venom gland.

The protein localises to the secreted. It catalyses the reaction an N-(acyl)-sphingosylphosphocholine = an N-(acyl)-sphingosyl-1,3-cyclic phosphate + choline. The catalysed reaction is an N-(acyl)-sphingosylphosphoethanolamine = an N-(acyl)-sphingosyl-1,3-cyclic phosphate + ethanolamine. The enzyme catalyses a 1-acyl-sn-glycero-3-phosphocholine = a 1-acyl-sn-glycero-2,3-cyclic phosphate + choline. It carries out the reaction a 1-acyl-sn-glycero-3-phosphoethanolamine = a 1-acyl-sn-glycero-2,3-cyclic phosphate + ethanolamine. Dermonecrotic toxins cleave the phosphodiester linkage between the phosphate and headgroup of certain phospholipids (sphingolipid and lysolipid substrates), forming an alcohol (often choline) and a cyclic phosphate. This toxin acts on sphingomyelin (SM). It may also act on ceramide phosphoethanolamine (CPE), lysophosphatidylcholine (LPC) and lysophosphatidylethanolamine (LPE), but not on lysophosphatidylserine (LPS), and lysophosphatidylglycerol (LPG). It acts by transphosphatidylation, releasing exclusively cyclic phosphate products as second products. Induces hemolysis, dermonecrosis, vascular permeability and platelet aggregation. The chain is Dermonecrotic toxin LiSicTox-alphaIA1bii from Loxosceles intermedia (Brown spider).